Reading from the N-terminus, the 379-residue chain is Heterogeneous nuclear ribonucleoprotein A3 (379 aa).

N-acetylmethionine is present on M1. Over residues 1-10 (MEVKPPPGRP) the composition is skewed to pro residues. The tract at residues 1-34 (MEVKPPPGRPQPDSGRRRRRRGEEGHDPKEPEQL) is disordered. A Glycyl lysine isopeptide (Lys-Gly) (interchain with G-Cter in SUMO2) cross-link involves residue K4. The residue at position 14 (S14) is a Phosphoserine. Positions 21–34 (RGEEGHDPKEPEQL) are enriched in basic and acidic residues. An RRM 1 domain is found at 35-118 (RKLFIGGLSF…RAVSREDSVK (84 aa)). K36 is covalently cross-linked (Glycyl lysine isopeptide (Lys-Gly) (interchain with G-Cter in SUMO2)). Residue S43 is modified to Phosphoserine. Position 52 is a dimethylated arginine; alternate (R52). R52 bears the Omega-N-methylarginine; alternate mark. Omega-N-methylarginine is present on R76. 2 positions are modified to phosphoserine: S112 and S116. K118 participates in a covalent cross-link: Glycyl lysine isopeptide (Lys-Gly) (interchain with G-Cter in SUMO2). T124 bears the Phosphothreonine mark. Residues 126–205 (KKIFVGGIKE…CEVKKALSKQ (80 aa)) form the RRM 2 domain. The residue at position 134 (K134) is an N6-acetyllysine; alternate. Residue K134 forms a Glycyl lysine isopeptide (Lys-Gly) (interchain with G-Cter in SUMO2); alternate linkage. Glycyl lysine isopeptide (Lys-Gly) (interchain with G-Cter in SUMO2) cross-links involve residues K151 and K182. Positions 204 to 225 (KQEMQSAGSQRGRGGGSGNFMG) are disordered. R214, R216, R226, R239, and R246 each carry omega-N-methylarginine; alternate. Residues R214, R216, R226, R239, and R246 each carry the asymmetric dimethylarginine; alternate modification. A compositionally biased stretch (gly residues) spans 214–225 (RGRGGGSGNFMG). The residue at position 257 (R257) is an Omega-N-methylarginine. R286 bears the Asymmetric dimethylarginine mark. The segment at 335-379 (NYSGQQQSNYGPMKGGSFGGRSSGSPYGGGYGSGGGSGGYGSRRF) is disordered. Residues 347–379 (MKGGSFGGRSSGSPYGGGYGSGGGSGGYGSRRF) are compositionally biased toward gly residues. Position 351 is a phosphoserine (S351). An Omega-N-methylarginine modification is found at R355. A Phosphoserine modification is found at S359. Phosphotyrosine is present on residues Y361 and Y365. A phosphoserine mark is found at S367 and S371. Phosphotyrosine is present on Y374. Residue S376 is modified to Phosphoserine.

As to quaternary structure, identified in the spliceosome C complex.

The protein resides in the nucleus. Functionally, plays a role in cytoplasmic trafficking of RNA. Binds to the cis-acting response element, A2RE. May be involved in pre-mRNA splicing. The polypeptide is Heterogeneous nuclear ribonucleoprotein A3 (Hnrnpa3) (Mus musculus (Mouse)).